The chain runs to 494 residues: Aldehyde dehydrogenase (494 aa).

223-228 (GSTTAG) is an NAD(+) binding site. Catalysis depends on residues E245 and C279.

It belongs to the aldehyde dehydrogenase family.

It carries out the reaction an aldehyde + NAD(+) + H2O = a carboxylate + NADH + 2 H(+). Its pathway is mycotoxin biosynthesis. Functionally, aldehyde dehydrogenase; part of the gene cluster that mediates the biosynthesis of the selective antifungal agent ascochitine, an o-quinone methide that plays a possible protective role against other microbial competitors in nature and is considered to be important for pathogenicity of legume-associated Didymella species. The pathway probably begins with the synthesis of a keto-aldehyde intermediate by the ascochitine non-reducing polyketide synthase pksAC from successive condensations of 4 malonyl-CoA units, presumably with a simple acetyl-CoA starter unit. Release of the keto-aldehyde intermediate is consistent with the presence of the C-terminal reductive release domain. The HR-PKS (orf7) probably makes a diketide starter unit which is passed to the non-reducing polyketide synthase pksAC for further extension, producing ascochital and ascochitine. The aldehyde dehydrogenase (orf1), the 2-oxoglutarate-dependent dioxygenase (orf3) and the dehydrogenase (orf9) are probably involved in subsequent oxidations of methyl groups to the carboxylic acid of the heterocyclic ring. The ascochitine gene cluster also includes a gene encoding a short peptide with a cupin domain (orf2) that is often found in secondary metabolite gene clusters and which function has still to be determined. In Didymella fabae (Leaf and pod spot disease fungus), this protein is Aldehyde dehydrogenase.